The chain runs to 436 residues: RNA polymerase sigma-54 factor (436 aa).

The H-T-H motif DNA-binding region spans 324-343; the sequence is TLREVADCLSLHESTVSRAI. An RPON box motif is present at residues 413 to 421; it reads SRRTVAKYR.

Belongs to the sigma-54 factor family. In terms of assembly, interacts transiently with the RNAP core.

Its function is as follows. Sigma factors are initiation factors that promote the attachment of RNA polymerase (RNAP) to specific initiation sites and are then released. This sigma factor is responsible for the expression of the levanase operon. The open complex (sigma-54 and core RNA polymerase) serves as the receptor for receipt of the melting signal from the remotely bound activator protein LevR for the expression of the levanase operon. Associates with the RNAP core only in stationary phase cells. The chain is RNA polymerase sigma-54 factor (sigL) from Bacillus subtilis (strain 168).